Here is a 264-residue protein sequence, read N- to C-terminus: Thymidylate synthase (264 aa).

R21 lines the dUMP pocket. H51 contacts (6R)-5,10-methylene-5,6,7,8-tetrahydrofolate. 126–127 (RR) contacts dUMP. C146 functions as the Nucleophile in the catalytic mechanism. Residues 166-169 (RSAD), N177, and 207-209 (HLY) contribute to the dUMP site. Position 169 (D169) interacts with (6R)-5,10-methylene-5,6,7,8-tetrahydrofolate. Residue A263 participates in (6R)-5,10-methylene-5,6,7,8-tetrahydrofolate binding.

Belongs to the thymidylate synthase family. Bacterial-type ThyA subfamily. In terms of assembly, homodimer.

Its subcellular location is the cytoplasm. It catalyses the reaction dUMP + (6R)-5,10-methylene-5,6,7,8-tetrahydrofolate = 7,8-dihydrofolate + dTMP. The protein operates within pyrimidine metabolism; dTTP biosynthesis. Functionally, catalyzes the reductive methylation of 2'-deoxyuridine-5'-monophosphate (dUMP) to 2'-deoxythymidine-5'-monophosphate (dTMP) while utilizing 5,10-methylenetetrahydrofolate (mTHF) as the methyl donor and reductant in the reaction, yielding dihydrofolate (DHF) as a by-product. This enzymatic reaction provides an intracellular de novo source of dTMP, an essential precursor for DNA biosynthesis. This is Thymidylate synthase from Bartonella tribocorum (strain CIP 105476 / IBS 506).